The chain runs to 590 residues: Plasmepsin V (590 aa).

Residues 1-544 are Lumenal-facing; it reads MNNYFLRKEN…EKENIFLKVS (544 aa). Residues 33 to 81 adopt a coiled-coil conformation; it reads CNNVENKIDNVGKKIENVGKKIGDMENKNDNVENKNDNVGNKNDNVKNA. The Peptidase A1 domain occupies 100-514; the sequence is YFLDIDIGKP…DLQQNQIAFI (415 aa). Residue Asp118 is part of the active site. 7 disulfides stabilise this stretch: Cys128-Cys211, Cys131-Cys134, Cys155-Cys166, Cys160-Cys171, Cys259-Cys518, Cys389-Cys434, and Cys443-Cys479. Basic and acidic residues predominate over residues 282–291; it reads KEKQKMDKSD. The disordered stretch occupies residues 282-316; it reads KEKQKMDKSDNNSSNKGNVSIKLKNNDKNDDEENN. A compositionally biased stretch (low complexity) spans 292–304; sequence NNSSNKGNVSIKL. Residue Asp365 is part of the active site. A helical transmembrane segment spans residues 545–565; it reads YINLYCLWLLLALTILLSLIL. Topologically, residues 566–590 are cytoplasmic; that stretch reads YVRKMFYMDYFPLSDQNKSPIQEST.

Belongs to the peptidase A1 family. As to quaternary structure, component of a complex composed of SPC25 and PMV; the interaction is mediated via the transmembrane domains. The complex interacts with the SEC61 channel-forming translocon complex and is involved in the recognition and import of PEXEL motif-containing proteins into the ER for subsequent export. In terms of processing, it is not clear if the zymogen has a cleavable propeptide. In vitro, appears to be cleaved between Asn-80 and Ala-81. Cleavage of the putative propeptide is dispensable for catalytic activity.

The protein localises to the endoplasmic reticulum membrane. Inhibited by peptidomimetic inhibitor WEHI-842. Inhibited by Cu(2+) and Hg(2+). Its function is as follows. During the asexual blood stage, plays an essential role in the export of several proteins into the host erythrocytes by cleaving the pentameric localization motif RxLxE/Q/D (termed Plasmodium export element (PEXEL)) located downstream of the N-terminal secretory signal sequence. Specifically, cleaves after the leucine residue in the RxLxE/Q/D (or RxLxxE) motif of exported proteins including RESA, EMP2, EMP3, KAHRP, RIF/Rifin and STEVOR. Also, by regulating protein export, plays an essential role in gametocyte development and thus, parasite transmission to the mosquito vector. In Plasmodium falciparum (isolate 3D7), this protein is Plasmepsin V.